The following is a 734-amino-acid chain: Photosystem I P700 chlorophyll a apoprotein A2 (734 aa).

8 helical membrane passes run 46 to 69 (IFASHFGHLAIIFLWTSGNLFHVA), 135 to 158 (LYSGALFLLVLSALLLFGGWLHLQ), 175 to 199 (LNHHLSGLFGVSSLARTGHLVHVAI), 273 to 291 (MAHHHLAIAVVFIVAGHMY), 330 to 353 (LHIQLGLALASLGVITSLVAQHMY), 369 to 395 (ASLYTHHQYIAGFLMVGAFAHGAIFFV), 417 to 439 (AIISHLSWVTLFLGFHTLGLYVH), and 517 to 535 (FLVHHAIALGLHTTTLILV). [4Fe-4S] cluster contacts are provided by Cys-559 and Cys-568. The next 2 helical transmembrane spans lie at 575-596 (AFYLAVFWMLNTIGWVTFYWHW) and 643-665 (LSVWSWMFLFGHLVWATGFMFLI). Chlorophyll a is bound by residues His-654, Met-662, and Tyr-670. Phylloquinone is bound at residue Trp-671. Residues 707 to 727 (LVGLAHFSVGYVLTYAAFVLA) traverse the membrane as a helical segment.

The protein belongs to the PsaA/PsaB family. In terms of assembly, the PsaA/B heterodimer binds the P700 chlorophyll special pair and subsequent electron acceptors. PSI consists of a core antenna complex that captures photons, and an electron transfer chain that converts photonic excitation into a charge separation. The eukaryotic PSI reaction center is composed of at least 11 subunits. It depends on P700 is a chlorophyll a/chlorophyll a' dimer, A0 is one or more chlorophyll a, A1 is one or both phylloquinones and FX is a shared 4Fe-4S iron-sulfur center. as a cofactor.

Its subcellular location is the plastid. It is found in the chloroplast thylakoid membrane. The enzyme catalyses reduced [plastocyanin] + hnu + oxidized [2Fe-2S]-[ferredoxin] = oxidized [plastocyanin] + reduced [2Fe-2S]-[ferredoxin]. In terms of biological role, psaA and PsaB bind P700, the primary electron donor of photosystem I (PSI), as well as the electron acceptors A0, A1 and FX. PSI is a plastocyanin/cytochrome c6-ferredoxin oxidoreductase, converting photonic excitation into a charge separation, which transfers an electron from the donor P700 chlorophyll pair to the spectroscopically characterized acceptors A0, A1, FX, FA and FB in turn. Oxidized P700 is reduced on the lumenal side of the thylakoid membrane by plastocyanin or cytochrome c6. This Pyropia yezoensis (Susabi-nori) protein is Photosystem I P700 chlorophyll a apoprotein A2.